A 314-amino-acid polypeptide reads, in one-letter code: Testis-specific Y-encoded protein 4 (314 aa).

It belongs to the nucleosome assembly protein (NAP) family.

It is found in the cytoplasm. The protein resides in the nucleus. Functionally, may be involved in sperm differentiation and proliferation. The polypeptide is Testis-specific Y-encoded protein 4 (TSPY4) (Homo sapiens (Human)).